A 364-amino-acid polypeptide reads, in one-letter code: Fructose-bisphosphate aldolase B (364 aa).

N-acetylalanine is present on Ala2. Lys13 bears the N6-succinyllysine mark. Residue Ser36 is modified to Phosphoserine. Thr39 is subject to Phosphothreonine. Arg43 serves as a coordination point for beta-D-fructose 1,6-bisphosphate. Residue Ser89 is modified to Phosphoserine. Position 119 is a phosphothreonine (Thr119). At Lys121 the chain carries N6-succinyllysine. Ser132 carries the phosphoserine modification. Catalysis depends on Glu188, which acts as the Proton acceptor. Ser206 is modified (phosphoserine). Lys230 serves as the catalytic Schiff-base intermediate with dihydroxyacetone-P. A phosphoserine mark is found at Ser272, Ser276, Ser299, and Ser301. 272–274 (SGG) serves as a coordination point for beta-D-fructose 1,6-bisphosphate. Arg304 is a beta-D-fructose 1,6-bisphosphate binding site. Phosphoserine is present on Ser309. Residue Lys317 is modified to N6-succinyllysine.

The protein belongs to the class I fructose-bisphosphate aldolase family. In terms of assembly, homotetramer. Interacts with BBS1, BBS2, BBS4 and BBS7. Forms a ternary complex with G6PD and TP53; this interaction is direct.

The protein localises to the cytoplasm. The protein resides in the cytosol. It localises to the cytoskeleton. Its subcellular location is the microtubule organizing center. It is found in the centrosome. The protein localises to the centriolar satellite. It catalyses the reaction beta-D-fructose 1,6-bisphosphate = D-glyceraldehyde 3-phosphate + dihydroxyacetone phosphate. It carries out the reaction beta-D-fructose 1-phosphate = D-glyceraldehyde + dihydroxyacetone phosphate. It participates in carbohydrate degradation; glycolysis; D-glyceraldehyde 3-phosphate and glycerone phosphate from D-glucose: step 4/4. It functions in the pathway carbohydrate biosynthesis; gluconeogenesis. Its pathway is carbohydrate metabolism; fructose metabolism. In terms of biological role, catalyzes the aldol cleavage of fructose 1,6-biphosphate to form two triosephosphates dihydroxyacetone phosphate and D-glyceraldehyde 3-phosphate in glycolysis as well as the reverse stereospecific aldol addition reaction in gluconeogenesis. In fructolysis, metabolizes fructose 1-phosphate derived from the phosphorylation of dietary fructose by fructokinase into dihydroxyacetone phosphate and D-glyceraldehyde. Acts as an adapter independently of its enzymatic activity, exerts a tumor suppressor role by stabilizing the ternary complex with G6PD and TP53 to inhibit G6PD activity and keep oxidative pentose phosphate metabolism in check. This is Fructose-bisphosphate aldolase B from Mus musculus (Mouse).